Here is a 374-residue protein sequence, read N- to C-terminus: Ribosomal RNA large subunit methyltransferase G (374 aa).

Belongs to the methyltransferase superfamily. RlmG family.

It localises to the cytoplasm. The catalysed reaction is guanosine(1835) in 23S rRNA + S-adenosyl-L-methionine = N(2)-methylguanosine(1835) in 23S rRNA + S-adenosyl-L-homocysteine + H(+). Specifically methylates the guanine in position 1835 (m2G1835) of 23S rRNA. The chain is Ribosomal RNA large subunit methyltransferase G from Pseudomonas syringae pv. tomato (strain ATCC BAA-871 / DC3000).